Reading from the N-terminus, the 445-residue chain is KICSTOR subunit 2 (445 aa).

This sequence belongs to the KICS2 family. As to quaternary structure, part of the KICSTOR complex composed of KPTN, ITFG2, KICS2 and SZT2. SZT2 probably serves as a link between the other three proteins in the KICSTOR complex and may mediate the direct interaction with the GATOR complex via GATOR1. The KICSTOR complex interacts directly with the GATOR1 complex and most probably indirectly with the GATOR2 complex in an amino acid-independent manner.

It is found in the lysosome membrane. As part of the KICSTOR complex functions in the amino acid-sensing branch of the TORC1 signaling pathway. Recruits, in an amino acid-independent manner, the GATOR1 complex to the lysosomal membranes and allows its interaction with GATOR2 and the RAG GTPases. Functions upstream of the RAG GTPases and is required to negatively regulate mTORC1 signaling in absence of amino acids. In absence of the KICSTOR complex mTORC1 is constitutively localized to the lysosome and activated. The KICSTOR complex is also probably involved in the regulation of mTORC1 by glucose. In Mus musculus (Mouse), this protein is KICSTOR subunit 2.